Consider the following 425-residue polypeptide: uncharacterized protein (425 aa).

In terms of domain architecture, HD spans 55 to 181; sequence RYAHSLGVYE…DLDTDRMDYL (127 aa).

This is an uncharacterized protein from Mycoplasma genitalium (strain ATCC 33530 / DSM 19775 / NCTC 10195 / G37) (Mycoplasmoides genitalium).